Consider the following 77-residue polypeptide: Conotoxin Bt6.6 (77 aa).

Positions 1-19 (MEKLTILLLVAAVLMSTQA) are cleaved as a signal peptide. Residues 20-38 (LIQSDGEKRQQAKINFLSX) constitute a propeptide that is removed on maturation. 3 disulfide bridges follow: C51–C65, C58–C69, and C64–C74.

This sequence belongs to the conotoxin O2 superfamily. Expressed by the venom duct.

The protein resides in the secreted. This is Conotoxin Bt6.6 from Conus betulinus (Beech cone).